The primary structure comprises 276 residues: Diaminopimelate epimerase (276 aa).

Residues asparagine 13, glutamine 46, and asparagine 66 each coordinate substrate. The Proton donor role is filled by cysteine 75. Residues 76–77 (GN), asparagine 159, asparagine 192, and 210–211 (ER) contribute to the substrate site. Cysteine 219 serves as the catalytic Proton acceptor. Substrate is bound at residue 220–221 (GT).

It belongs to the diaminopimelate epimerase family. In terms of assembly, homodimer.

The protein localises to the cytoplasm. The enzyme catalyses (2S,6S)-2,6-diaminopimelate = meso-2,6-diaminopimelate. Its pathway is amino-acid biosynthesis; L-lysine biosynthesis via DAP pathway; DL-2,6-diaminopimelate from LL-2,6-diaminopimelate: step 1/1. In terms of biological role, catalyzes the stereoinversion of LL-2,6-diaminopimelate (L,L-DAP) to meso-diaminopimelate (meso-DAP), a precursor of L-lysine and an essential component of the bacterial peptidoglycan. In Pseudomonas savastanoi pv. phaseolicola (strain 1448A / Race 6) (Pseudomonas syringae pv. phaseolicola (strain 1448A / Race 6)), this protein is Diaminopimelate epimerase.